The chain runs to 152 residues: VQ motif-containing protein 8, chloroplastic (152 aa).

The interval M1–A42 is disordered. The N-terminal 58 residues, M1 to R58, are a transit peptide targeting the chloroplast. The VQ signature appears at F62–G71. Positions T80–T108 are disordered. The segment covering S81 to V92 has biased composition (low complexity).

The protein resides in the plastid. The protein localises to the chloroplast. May be involved in chloroplast development. The polypeptide is VQ motif-containing protein 8, chloroplastic (Arabidopsis thaliana (Mouse-ear cress)).